Consider the following 219-residue polypeptide: MKIAVITFPGSNCDSDIYRVLKDQYNAEVDRIWHRDGLDKKYELVILPGGFSYGDYLRSGAMAGFSPVMKSVKEHVDKGGKLFGICNGFQILTEAEYLPGALIRNKTLKYICKTVILTKGSAGNPVTASMDVRKELKIPIAHADGCYYATSDVLKQLEDEDRILFRYSGENPNGSLDSIAGITSKNFKIVGMMPHPERAMNPITGEMDGKVVLDLILGS.

Residues 2-219 (KIAVITFPGS…KVVLDLILGS (218 aa)) form the Glutamine amidotransferase type-1 domain. Cys86 functions as the Nucleophile in the catalytic mechanism. Active-site residues include His195 and Glu197.

In terms of assembly, part of the FGAM synthase complex composed of 1 PurL, 1 PurQ and 2 PurS subunits.

It is found in the cytoplasm. The catalysed reaction is N(2)-formyl-N(1)-(5-phospho-beta-D-ribosyl)glycinamide + L-glutamine + ATP + H2O = 2-formamido-N(1)-(5-O-phospho-beta-D-ribosyl)acetamidine + L-glutamate + ADP + phosphate + H(+). It catalyses the reaction L-glutamine + H2O = L-glutamate + NH4(+). It participates in purine metabolism; IMP biosynthesis via de novo pathway; 5-amino-1-(5-phospho-D-ribosyl)imidazole from N(2)-formyl-N(1)-(5-phospho-D-ribosyl)glycinamide: step 1/2. Part of the phosphoribosylformylglycinamidine synthase complex involved in the purines biosynthetic pathway. Catalyzes the ATP-dependent conversion of formylglycinamide ribonucleotide (FGAR) and glutamine to yield formylglycinamidine ribonucleotide (FGAM) and glutamate. The FGAM synthase complex is composed of three subunits. PurQ produces an ammonia molecule by converting glutamine to glutamate. PurL transfers the ammonia molecule to FGAR to form FGAM in an ATP-dependent manner. PurS interacts with PurQ and PurL and is thought to assist in the transfer of the ammonia molecule from PurQ to PurL. This chain is Phosphoribosylformylglycinamidine synthase subunit PurQ, found in Leptospira interrogans serogroup Icterohaemorrhagiae serovar copenhageni (strain Fiocruz L1-130).